Here is a 447-residue protein sequence, read N- to C-terminus: Exodeoxyribonuclease 7 large subunit (447 aa).

The protein belongs to the XseA family. As to quaternary structure, heterooligomer composed of large and small subunits.

The protein resides in the cytoplasm. It carries out the reaction Exonucleolytic cleavage in either 5'- to 3'- or 3'- to 5'-direction to yield nucleoside 5'-phosphates.. Its function is as follows. Bidirectionally degrades single-stranded DNA into large acid-insoluble oligonucleotides, which are then degraded further into small acid-soluble oligonucleotides. The polypeptide is Exodeoxyribonuclease 7 large subunit (Lactiplantibacillus plantarum (strain ATCC BAA-793 / NCIMB 8826 / WCFS1) (Lactobacillus plantarum)).